The sequence spans 276 residues: Myoblast determination protein 1 homolog 1 (276 aa).

The 52-residue stretch at 84-135 (DRRKAATMRERRRLSKVNDAFETLKRCTSTNPNQRLPKVDILRNAISYIESL) folds into the bHLH domain. Residues 228-253 (CPAVQDGSEGSSPCSPGDGSIASENG) form a disordered region.

In terms of assembly, efficient DNA binding requires dimerization with another bHLH protein.

The protein resides in the nucleus. In terms of biological role, may act as a transcriptional activator that promotes transcription of muscle-specific target genes and plays a role in muscle differentiation. The sequence is that of Myoblast determination protein 1 homolog 1 (myod1) from Oncorhynchus mykiss (Rainbow trout).